The following is a 45-amino-acid chain: Large ribosomal subunit protein bL34 (45 aa).

This sequence belongs to the bacterial ribosomal protein bL34 family.

This Clavibacter michiganensis subsp. michiganensis (strain NCPPB 382) protein is Large ribosomal subunit protein bL34.